The sequence spans 290 residues: Phosphatidylglycerol--prolipoprotein diacylglyceryl transferase (290 aa).

7 helical membrane passes run 21–41 (VSLHWYGLMYLVGFVFAMWLA), 60–80 (LLYAGFLGVFVGGRVGYVLFY), 96–116 (WDGGMSFHGGLIGVICVMLWF), 124–144 (FFQVADFIAPLIPFGLGAGRL), 199–219 (SQLYEMILEGVVLFIILNLFI), 226–246 (GSVSGLFLIGYGAFRIIVECF), and 259–279 (VISMGQILSVPMILAGIIMMI). An a 1,2-diacyl-sn-glycero-3-phospho-(1'-sn-glycerol)-binding site is contributed by R143.

It belongs to the Lgt family.

Its subcellular location is the cell inner membrane. The enzyme catalyses L-cysteinyl-[prolipoprotein] + a 1,2-diacyl-sn-glycero-3-phospho-(1'-sn-glycerol) = an S-1,2-diacyl-sn-glyceryl-L-cysteinyl-[prolipoprotein] + sn-glycerol 1-phosphate + H(+). Its pathway is protein modification; lipoprotein biosynthesis (diacylglyceryl transfer). Functionally, catalyzes the transfer of the diacylglyceryl group from phosphatidylglycerol to the sulfhydryl group of the N-terminal cysteine of a prolipoprotein, the first step in the formation of mature lipoproteins. In Yersinia enterocolitica serotype O:8 / biotype 1B (strain NCTC 13174 / 8081), this protein is Phosphatidylglycerol--prolipoprotein diacylglyceryl transferase.